We begin with the raw amino-acid sequence, 124 residues long: Small ribosomal subunit protein uS12 (124 aa).

Residues 1–30 (MPTIQQLVRKGRTPKVTKTKAPALKANPQQ) are disordered. The segment covering 9-18 (RKGRTPKVTK) has biased composition (basic residues).

Belongs to the universal ribosomal protein uS12 family. In terms of assembly, part of the 30S ribosomal subunit. Contacts proteins S8 and S17. May interact with IF1 in the 30S initiation complex.

Functionally, with S4 and S5 plays an important role in translational accuracy. In terms of biological role, interacts with and stabilizes bases of the 16S rRNA that are involved in tRNA selection in the A site and with the mRNA backbone. Located at the interface of the 30S and 50S subunits, it traverses the body of the 30S subunit contacting proteins on the other side and probably holding the rRNA structure together. The combined cluster of proteins S8, S12 and S17 appears to hold together the shoulder and platform of the 30S subunit. In Leifsonia xyli subsp. xyli (strain CTCB07), this protein is Small ribosomal subunit protein uS12.